Reading from the N-terminus, the 834-residue chain is Protein Jade-1 (834 aa).

Residues 1 to 46 (MKRGRLPSSSEDSDDNGSLSTTWSQHSRSQHGRSSTCSRPEDRKPS) are disordered. Positions 24 to 35 (SQHSRSQHGRSS) are enriched in low complexity. The interval 61-81 (DSYQLNPDDYYVLADPWRQEW) is interaction with KAT7/HBO1 and histones. Residues 81 to 189 (WEKGVQVPVS…EQRCYDNMNH (109 aa)) are interaction with histones. Ser90 is modified (phosphoserine). Thr93 carries the phosphothreonine modification. Residue Lys115 forms a Glycyl lysine isopeptide (Lys-Gly) (interchain with G-Cter in SUMO2) linkage. The segment at 204–254 (DVVCDVCQSPDGEDGNEMVFCDKCNICVHQACYGILKVPEGSWLCRTCALG) adopts a PHD-type 1 zinc-finger fold. The C2HC pre-PHD-type zinc-finger motif lies at 256–290 (QPKCLLCPKKGGAMKPTRSGTKWVHVSCALWIPEV). The PHD-type 2 zinc-finger motif lies at 314–370 (LVCSLCNEKFGASIQCSVKNCRTAFHVTCAFDRGLEMKTILAENDEVKFKSYCPKHS). A disordered region spans residues 367–409 (PKHSSHRKPEEGLGEGAAQENGAPESSPQSPLEPYGSLEPNRE). Lys573 participates in a covalent cross-link: Glycyl lysine isopeptide (Lys-Gly) (interchain with G-Cter in SUMO2). 2 disordered regions span residues 589–621 (HPLK…CGRR) and 676–716 (DKSF…GTRK). The residue at position 603 (Ser603) is a Phosphoserine. Lys609 is modified (N6-acetyllysine). Residues Ser704 and Ser735 each carry the phosphoserine modification. The disordered stretch occupies residues 738-819 (KSWGGFRIPK…EKKCIHASST (82 aa)). Composition is skewed to basic and acidic residues over residues 747–768 (KKGE…HSDC) and 777–790 (PAKE…RADS).

This sequence belongs to the JADE family. As to quaternary structure, component of the HBO1 complex composed at least of ING4 or ING5, KAT7/HBO1, MEAF6, and one of JADE1, JADE2 and JADE3. Interacts with NPHP4. As to expression, highly expressed in kidney. Also present in liver (at protein level).

It is found in the nucleus. It localises to the chromosome. The protein localises to the cytoplasm. The protein resides in the cytoskeleton. Its subcellular location is the cilium basal body. Scaffold subunit of some HBO1 complexes, which have a histone H4 acetyltransferase activity. Plays a key role in HBO1 complex by directing KAT7/HBO1 specificity towards histone H4 acetylation (H4K5ac, H4K8ac and H4K12ac), regulating DNA replication initiation, regulating DNA replication initiation. May also promote acetylation of nucleosomal histone H4 by KAT5. Promotes apoptosis. May act as a renal tumor suppressor. Negatively regulates canonical Wnt signaling; at least in part, cooperates with NPHP4 in this function. This is Protein Jade-1 (Jade1) from Mus musculus (Mouse).